The chain runs to 51 residues: Large ribosomal subunit protein bL33 (51 aa).

This sequence belongs to the bacterial ribosomal protein bL33 family.

The sequence is that of Large ribosomal subunit protein bL33 from Colwellia psychrerythraea (strain 34H / ATCC BAA-681) (Vibrio psychroerythus).